Here is a 144-residue protein sequence, read N- to C-terminus: MFLNTIKPGEGAKHAKRRVGRGIGSGLGKTAGRGHKGQKSRSGGFHKVGFEGGQMPLQRRLPKRGFKSLTRKLTAEVRLDDLARLPVDEIDFLALQQAGLVPAAARIAKVILAGKIERAVTLRGLLATAGAKAAIEAAGGQVNE.

The interval 1–53 is disordered; the sequence is MFLNTIKPGEGAKHAKRRVGRGIGSGLGKTAGRGHKGQKSRSGGFHKVGFEGG. Residues 21-31 show a composition bias toward gly residues; sequence RGIGSGLGKTA.

This sequence belongs to the universal ribosomal protein uL15 family. Part of the 50S ribosomal subunit.

Its function is as follows. Binds to the 23S rRNA. The protein is Large ribosomal subunit protein uL15 of Laribacter hongkongensis (strain HLHK9).